The following is a 169-amino-acid chain: MLRLDAELNKDTISKLKKPLGKLYPHFEDAIEEIKSSEFLISVGDATFNNLTKYELYPDIGIIDNLIQRKNHNHEVIKAENILKAKNPAGTITDDLWETIGQAMKLSGDGNCHVIEVDGEEDLAVLPCILMASDETTILYGQPNEGLVLLKVCDAKDYAQNLIDTFIKE.

GTP-binding residues include D45, D64, and E121.

The protein belongs to the GTP-dependent DPCK family.

The enzyme catalyses 3'-dephospho-CoA + GTP = GDP + CoA + H(+). It functions in the pathway cofactor biosynthesis; coenzyme A biosynthesis. Its function is as follows. Catalyzes the GTP-dependent phosphorylation of the 3'-hydroxyl group of dephosphocoenzyme A to form coenzyme A (CoA). The chain is GTP-dependent dephospho-CoA kinase from Methanobrevibacter smithii (strain ATCC 35061 / DSM 861 / OCM 144 / PS).